Reading from the N-terminus, the 411-residue chain is Tetra-peptide repeat homeobox protein 1 (411 aa).

Positions 3–24 (SLREQQLQVWFKNRRAKLARER) form a DNA-binding region, homeobox. Disordered regions lie at residues 20–63 (LARE…SGIL), 88–246 (IPAA…ISGP), 286–340 (PILS…SPDA), and 363–411 (LEGS…LLDL). The span at 27–55 (QQQPQRVPGQRGRGARAAPLVPAASASAP) shows a compositional bias: low complexity. Composition is skewed to pro residues over residues 95–139 (GPGP…PGPI) and 149–246 (FRGP…ISGP). Positions 295–307 (SPGSLPGLAPILG) are enriched in low complexity. The segment covering 319–335 (APIPGPGSLPAPAPLWP) has biased composition (pro residues). Polar residues-rich tracts occupy residues 366–376 (SSVSTMTSQYQ) and 388–402 (GSQP…NENH).

The protein belongs to the paired homeobox family.

It localises to the nucleus. Transcription factor expressed after fertilization required for zygotic genome activation (ZGA), a critical event in early embryonic development during which the developmental control passes from maternally provided mRNAs to the expression of the zygotic genome after fertilization. Binds and activates expression of key ZGA marker genes, such as NANOGNB, ZSCAN4, DUXB, KLF5 and DPPA3. Binds to regulatory DNA sequences containing a 5'-TAATCC-3' sequence motif. The chain is Tetra-peptide repeat homeobox protein 1 from Homo sapiens (Human).